A 182-amino-acid chain; its full sequence is Inner membrane-spanning protein YciB (182 aa).

5 helical membrane-spanning segments follow: residues 20-42 (GGIY…WVYY), 55-75 (LIMI…TFIL), 76-96 (LKPT…AQFF), 123-143 (LNLA…YIAF), and 153-173 (FKLF…GFWM).

It belongs to the YciB family.

The protein localises to the cell inner membrane. Its function is as follows. Plays a role in cell envelope biogenesis, maintenance of cell envelope integrity and membrane homeostasis. The sequence is that of Inner membrane-spanning protein YciB from Polynucleobacter asymbioticus (strain DSM 18221 / CIP 109841 / QLW-P1DMWA-1) (Polynucleobacter necessarius subsp. asymbioticus).